We begin with the raw amino-acid sequence, 331 residues long: Biotin synthase (331 aa).

A Radical SAM core domain is found at 52 to 277 (PEVEVEGIVS…RTILRYAGGR (226 aa)). Residues C67, C71, and C74 each contribute to the [4Fe-4S] cluster site. [2Fe-2S] cluster is bound by residues C110, C202, and R272.

This sequence belongs to the radical SAM superfamily. Biotin synthase family. Homodimer. Requires [4Fe-4S] cluster as cofactor. [2Fe-2S] cluster is required as a cofactor.

The enzyme catalyses (4R,5S)-dethiobiotin + (sulfur carrier)-SH + 2 reduced [2Fe-2S]-[ferredoxin] + 2 S-adenosyl-L-methionine = (sulfur carrier)-H + biotin + 2 5'-deoxyadenosine + 2 L-methionine + 2 oxidized [2Fe-2S]-[ferredoxin]. It participates in cofactor biosynthesis; biotin biosynthesis; biotin from 7,8-diaminononanoate: step 2/2. Catalyzes the conversion of dethiobiotin (DTB) to biotin by the insertion of a sulfur atom into dethiobiotin via a radical-based mechanism. In Salinispora tropica (strain ATCC BAA-916 / DSM 44818 / JCM 13857 / NBRC 105044 / CNB-440), this protein is Biotin synthase.